A 333-amino-acid chain; its full sequence is Serine/threonine-protein phosphatase PP1-beta (333 aa).

Residues Asp-63, His-65, Asp-91, and Asn-123 each coordinate Mn(2+). The active-site Proton donor is the His-124. His-172 and His-247 together coordinate Mn(2+). Residues 306 to 333 (GAGGVGSNRPVTPPRNAPAAQPKKGAKK) are disordered. The segment covering 322 to 333 (APAAQPKKGAKK) has biased composition (low complexity).

It belongs to the PPP phosphatase family. PP-1 subfamily. As to quaternary structure, interacts with lab-1; the interaction is direct. Interacts with knl-1; the interaction is direct. Mn(2+) serves as cofactor. Expressed in gonads, nervous system, intestine and muscles.

It localises to the cytoplasm. Its subcellular location is the nucleus. It carries out the reaction O-phospho-L-seryl-[protein] + H2O = L-seryl-[protein] + phosphate. The catalysed reaction is O-phospho-L-threonyl-[protein] + H2O = L-threonyl-[protein] + phosphate. With respect to regulation, inhibited by okadaic acid. Its function is as follows. Serine/threonine-protein phosphatase essential for chromosomal dynamics during meiosis and mitosis. During meiosis, promotes chromosomal cohesion and germline immortality via a small RNA-mediated genome silencing pathway. Antagonizes the function of air-2 kinase during meiosis I and mitosis to promote chromatid cohesion and spindle attachment. Dephosphorylates histone H3 at 'Ser-10'. Dephosphorylates histone H3 at 'Thr-3'. Also involved in the activation of chloride channel clh-3 during cell swelling and meiotic maturation. Promotes small RNA-mediated genome silencing over multiple generations. Essential for embryogenesis. The protein is Serine/threonine-protein phosphatase PP1-beta of Caenorhabditis elegans.